Reading from the N-terminus, the 734-residue chain is Photosystem I P700 chlorophyll a apoprotein A2 (734 aa).

Transmembrane regions (helical) follow at residues 46–69 (IFASHFGQLAIIFLWTSGNLFHVA), 135–158 (LYNGSMFLLFIATLALFAGWLHLE), 175–199 (LNHHLSALFGLSSLAWSGHLIHVAI), 273–291 (IAHHHLAIAVLFIVAGHMY), 330–353 (LHFQLGLALASLGVITSLVAQHMY), 369–395 (AALYTHHQYIAGFIMTGAFAHGAIFFI), 417–439 (AIISHLSWVTLFLGFHTLGLYVH), and 517–535 (FLVHHAIALGLHTTTLILV). Cys559 and Cys568 together coordinate [4Fe-4S] cluster. 2 consecutive transmembrane segments (helical) span residues 575–596 (AFYLAVFWMLNTIGWTTFYWHW) and 643–665 (LAVWGWMFLFGHLVWATGFMFLI). The chlorophyll a site is built by His654, Met662, and Tyr670. Trp671 is a phylloquinone binding site. The helical transmembrane segment at 707-727 (LVGLAHFSVGYVFTYAAFLIA) threads the bilayer.

The protein belongs to the PsaA/PsaB family. As to quaternary structure, the PsaA/B heterodimer binds the P700 chlorophyll special pair and subsequent electron acceptors. PSI consists of a core antenna complex that captures photons, and an electron transfer chain that converts photonic excitation into a charge separation. The eukaryotic PSI reaction center is composed of at least 11 subunits. It depends on P700 is a chlorophyll a/chlorophyll a' dimer, A0 is one or more chlorophyll a, A1 is one or both phylloquinones and FX is a shared 4Fe-4S iron-sulfur center. as a cofactor.

It is found in the plastid. It localises to the chloroplast thylakoid membrane. It catalyses the reaction reduced [plastocyanin] + hnu + oxidized [2Fe-2S]-[ferredoxin] = oxidized [plastocyanin] + reduced [2Fe-2S]-[ferredoxin]. PsaA and PsaB bind P700, the primary electron donor of photosystem I (PSI), as well as the electron acceptors A0, A1 and FX. PSI is a plastocyanin/cytochrome c6-ferredoxin oxidoreductase, converting photonic excitation into a charge separation, which transfers an electron from the donor P700 chlorophyll pair to the spectroscopically characterized acceptors A0, A1, FX, FA and FB in turn. Oxidized P700 is reduced on the lumenal side of the thylakoid membrane by plastocyanin or cytochrome c6. This is Photosystem I P700 chlorophyll a apoprotein A2 from Euglena gracilis.